Reading from the N-terminus, the 353-residue chain is MTATLERRESASLWSRFCDWITSTDNRLYIGWFGVLMIPLLLTATSVFIIAFIAAPPVDIDGIREPVSGSLLYGNNIISGAIVPTSAAIGLHFYPIWEAASLDEWLYNGGPYEMIVLHFLLGVCCYMGREWELSFRLGMRPWIAVAYSAPVAAATAVFLIYPIGQGSFSDGMPLGISGTFNFMIVFQAEHNILMHPFHMLGVAGVFGGSLFSAMHGSLVTSSLIRETTENESANAGYKFGQEEETYNIVAAHGYFGRLIFQYASFNNSRALHFFLAAWPVIGIWFTALGISTMAFNLNGFNFNQSVVDSQGRVINTWADIINRANLGMEVMHERNAHNFPLDLASVEAPSVNG.

Threonine 2 carries the N-acetylthreonine modification. Threonine 2 is subject to Phosphothreonine. Helical transmembrane passes span 29–46 (YIGW…TATS), 118–133 (HFLL…EWEL), and 142–156 (WIAV…AATA). Histidine 118 contacts chlorophyll a. Tyrosine 126 is a binding site for pheophytin a. Residues aspartate 170 and glutamate 189 each coordinate [CaMn4O5] cluster. Residues 197 to 218 (FHMLGVAGVFGGSLFSAMHGSL) form a helical membrane-spanning segment. A chlorophyll a-binding site is contributed by histidine 198. A quinone-binding positions include histidine 215 and 264–265 (SF). Histidine 215 serves as a coordination point for Fe cation. Histidine 272 contacts Fe cation. The chain crosses the membrane as a helical span at residues 274–288 (FLAAWPVIGIWFTAL). Residues histidine 332, glutamate 333, aspartate 342, and alanine 344 each coordinate [CaMn4O5] cluster. The propeptide occupies 345–353 (SVEAPSVNG).

This sequence belongs to the reaction center PufL/M/PsbA/D family. PSII is composed of 1 copy each of membrane proteins PsbA, PsbB, PsbC, PsbD, PsbE, PsbF, PsbH, PsbI, PsbJ, PsbK, PsbL, PsbM, PsbT, PsbX, PsbY, PsbZ, Psb30/Ycf12, at least 3 peripheral proteins of the oxygen-evolving complex and a large number of cofactors. It forms dimeric complexes. The D1/D2 heterodimer binds P680, chlorophylls that are the primary electron donor of PSII, and subsequent electron acceptors. It shares a non-heme iron and each subunit binds pheophytin, quinone, additional chlorophylls, carotenoids and lipids. D1 provides most of the ligands for the Mn4-Ca-O5 cluster of the oxygen-evolving complex (OEC). There is also a Cl(-1) ion associated with D1 and D2, which is required for oxygen evolution. The PSII complex binds additional chlorophylls, carotenoids and specific lipids. is required as a cofactor. Post-translationally, tyr-161 forms a radical intermediate that is referred to as redox-active TyrZ, YZ or Y-Z. In terms of processing, C-terminally processed by CTPA; processing is essential to allow assembly of the oxygen-evolving complex and thus photosynthetic growth.

It localises to the plastid. Its subcellular location is the chloroplast thylakoid membrane. It carries out the reaction 2 a plastoquinone + 4 hnu + 2 H2O = 2 a plastoquinol + O2. In terms of biological role, photosystem II (PSII) is a light-driven water:plastoquinone oxidoreductase that uses light energy to abstract electrons from H(2)O, generating O(2) and a proton gradient subsequently used for ATP formation. It consists of a core antenna complex that captures photons, and an electron transfer chain that converts photonic excitation into a charge separation. The D1/D2 (PsbA/PsbD) reaction center heterodimer binds P680, the primary electron donor of PSII as well as several subsequent electron acceptors. The protein is Photosystem II protein D1 of Chlorokybus atmophyticus (Soil alga).